Consider the following 570-residue polypeptide: Chaperonin GroEL 1 (570 aa).

ATP-binding positions include 42-45 (TLGP), lysine 63, 99-103 (DGTTT), glycine 427, and aspartate 507. The segment at 537–570 (EDEDDDDGGGGGGGGMPAGGAGGMGGMGGMGGMM) is disordered. The span at 545 to 570 (GGGGGGGMPAGGAGGMGGMGGMGGMM) shows a compositional bias: gly residues.

Belongs to the chaperonin (HSP60) family. Forms a cylinder of 14 subunits composed of two heptameric rings stacked back-to-back. Interacts with the co-chaperonin GroES.

The protein resides in the cytoplasm. The enzyme catalyses ATP + H2O + a folded polypeptide = ADP + phosphate + an unfolded polypeptide.. Together with its co-chaperonin GroES, plays an essential role in assisting protein folding. The GroEL-GroES system forms a nano-cage that allows encapsulation of the non-native substrate proteins and provides a physical environment optimized to promote and accelerate protein folding. The protein is Chaperonin GroEL 1 of Salinibacter ruber (strain DSM 13855 / M31).